Here is a 188-residue protein sequence, read N- to C-terminus: Succinate dehydrogenase [ubiquinone] cytochrome b large subunit, mitochondrial (188 aa).

The N-terminal 31 residues, 1–31, are a transit peptide targeting the mitochondrion; that stretch reads MSLLPYNATLCRVLRHNVKFIRSVQTSAARV. Over 32–69 the chain is Mitochondrial matrix; it reads SAEKTPIQVWGWDYLMRQRALKRPIAPHLTIYKPQMTW. A helical transmembrane segment spans residues 70–95; the sequence is MVSGLHRVTGCAMAGTLLIGGVGFSV. S72 and R76 together coordinate a rhodoquinol. A ubiquinone is bound by residues S72 and R76. Over 96–113 the chain is Mitochondrial intermembrane; that stretch reads LPLDFTTFVEFIRGLGIP. Residues 114–140 traverse the membrane as a helical segment; it reads WVILDTFKFIIAFPIAFHTLNGIRFIG. H131 is a heme b binding site. Residues 141–153 are Mitochondrial matrix-facing; sequence FDMAKGTDIPSIY. The chain crosses the membrane as a helical span at residues 154 to 176; that stretch reads RGAYLVLGLAALISLAVVVYPRW. The Mitochondrial intermembrane segment spans residues 177-188; sequence ERHKKATLPTNH.

The protein belongs to the cytochrome b558 family. As to quaternary structure, component of the mitochondrial electron transport chain complex II composed of four subunits: a flavoprotein (Fp), an iron-sulfur protein (Ip), and a large cytochrome b (CybL) subunit and a small cytochrome b (CybS) subunit. There are 2 developmental stage-specific forms of complex II which have the Ip and CybL subunits in common. Complex II from the free-living larvae (aerobic environment) acts as a succinate dehydrogenase and is composed of the common subunit Ip and CybL and the stage specific subunits FpL and CybSL. Complex II from parasitic larvae and adults (anaerobic environment) acts as a fumarate reductase and is composed of the common subunit Ip and CybL and the stage specific subunits FpA and CybSA. Requires heme b as cofactor. In terms of tissue distribution, expressed in adult muscles (at protein level).

The protein resides in the mitochondrion inner membrane. The protein operates within carbohydrate metabolism; tricarboxylic acid cycle; fumarate from succinate (eukaryal route): step 1/1. Membrane-bound large subunit (CybL) of the mitochondrial electron transport chain complex II, which together with the membrane-bound small subunit (CybS), anchor the catalytic subunits to the inner mitochondria membrane. During the free-living egg-larvae stages, which occur in an aerobic environment, complex II acts as a succinate dehydrogenase by transferring electrons from succinate to ubiquinone. During the parasitic larvae and adult stages, which occur in an anaerobic environment, complex II acts as a fumarate reductase by transferring electrons from rhodoquinol to fumarate. The polypeptide is Succinate dehydrogenase [ubiquinone] cytochrome b large subunit, mitochondrial (Ascaris suum (Pig roundworm)).